The chain runs to 396 residues: Decapping nuclease RAI1 (396 aa).

107 to 109 is a binding site for substrate; that stretch reads YRG. Residue Glu-179 participates in a divalent metal cation binding. Position 228 (Glu-228) interacts with substrate. Residues Asp-230, Glu-249, and Leu-250 each coordinate a divalent metal cation. Residues Lys-251 and Gln-275 each contribute to the substrate site.

Belongs to the DXO/Dom3Z family. In terms of assembly, interacts with RAT1; the interaction is direct, stabilizes RAT1 protein structure and stimulates its exoribonuclease activity. The interaction also stimulates RAI1 pyrophosphohydrolase activity, probably by recruiting it to mRNA substrates. A divalent metal cation serves as cofactor.

It localises to the nucleus. The enzyme catalyses a 5'-end NAD(+)-phospho-ribonucleoside in mRNA + H2O = a 5'-end phospho-ribonucleoside in mRNA + NAD(+) + H(+). The catalysed reaction is a 5'-end (N(7)-methyl 5'-triphosphoguanosine)-ribonucleoside-ribonucleotide in mRNA + H2O = a (N(7)-methyl 5'-triphosphoguanosine)-nucleoside + a 5'-end phospho-ribonucleoside in mRNA + H(+). It catalyses the reaction a 5'-end triphospho-ribonucleoside in mRNA + H2O = a 5'-end phospho-ribonucleoside in mRNA + diphosphate + H(+). Functionally, decapping enzyme for NAD-capped RNAs: specifically hydrolyzes the nicotinamide adenine dinucleotide (NAD) cap from a subset of RNAs by removing the entire NAD moiety from the 5'-end of an NAD-capped RNA. The NAD-cap is present at the 5'-end of some RNAs and snoRNAs. In contrast to the canonical 5'-end N7 methylguanosine (m7G) cap, the NAD cap promotes mRNA decay. Also acts as a non-canonical decapping enzyme that removes the entire cap structure of m7G capped or incompletely capped RNAs. Has decapping activity toward incomplete 5'-end m7G cap mRNAs such as unmethylated 5'-end-capped RNA (cap0), while it has no activity toward 2'-O-ribose methylated m7G cap (cap1). Also possesses RNA 5'-pyrophosphohydrolase activity by hydrolyzing the 5'-end triphosphate to release pyrophosphates. Stimulates exoribonuclease activity of Rat1, allowing it to degrade RNAs with stable secondary structure more effectively. This chain is Decapping nuclease RAI1, found in Scheffersomyces stipitis (strain ATCC 58785 / CBS 6054 / NBRC 10063 / NRRL Y-11545) (Yeast).